A 348-amino-acid polypeptide reads, in one-letter code: Type II methyltransferase M.BglI (348 aa).

It belongs to the N(4)/N(6)-methyltransferase family.

The enzyme catalyses a 2'-deoxycytidine in DNA + S-adenosyl-L-methionine = an N(4)-methyl-2'-deoxycytidine in DNA + S-adenosyl-L-homocysteine + H(+). Functionally, a beta subtype methylase, recognizes the double-stranded sequence 5'-GCCNNNNNGGC-3', methylates C-2 on both strands, and protects the DNA from cleavage by the BglI endonuclease. The protein is Type II methyltransferase M.BglI (bglIM) of Bacillus subtilis.